A 58-amino-acid polypeptide reads, in one-letter code: Conotoxin TxXIIIA (58 aa).

The signal sequence occupies residues 1 to 22 (MRCLPVFVILLLLIASVPSVDA). Positions 23–46 (ELKAKDDMPQASFHDNAERDQQKK) are excised as a propeptide.

In terms of assembly, homodimer; disulfide-linked. In terms of processing, 5 disulfide bonds are present in each homodimer: two intrachain disulfide bonds per subunit, and one interchain disulfide bond linking the two subunits. As to expression, expressed by the venom duct.

It is found in the secreted. In Conus textile (Cloth-of-gold cone), this protein is Conotoxin TxXIIIA.